The chain runs to 1555 residues: Probable serine/threonine-protein kinase DDB_G0276181 (1555 aa).

Disordered stretches follow at residues Met1–Phe54, Ile138–Leu208, Lys342–Phe452, Thr486–Leu508, and Asn781–Thr850. 4 stretches are compositionally biased toward low complexity: residues Asn14–Ser53, Ile138–Asn205, Ser359–Gly378, and Asn395–Pro431. A PH domain is found at Gln58–Ser238. The segment covering Arg437–Phe452 has biased composition (polar residues). 2 stretches are compositionally biased toward low complexity: residues Thr486–Asn504 and Asn781–Asn832. The segment covering Gly833–Thr850 has biased composition (polar residues). The 324-residue stretch at Val986–Ile1309 folds into the Protein kinase domain. Position 992–1000 (Leu992–Ile1000) interacts with ATP. The segment at Arg1012 to His1031 is disordered. Lys1061 contributes to the ATP binding site. The active-site Proton acceptor is the Asp1156. The span at Val1340–Leu1376 shows a compositional bias: low complexity. 2 disordered regions span residues Val1340–Asn1383 and Lys1457–Arg1480.

The protein belongs to the protein kinase superfamily. TKL Ser/Thr protein kinase family.

It carries out the reaction L-seryl-[protein] + ATP = O-phospho-L-seryl-[protein] + ADP + H(+). The enzyme catalyses L-threonyl-[protein] + ATP = O-phospho-L-threonyl-[protein] + ADP + H(+). The chain is Probable serine/threonine-protein kinase DDB_G0276181 from Dictyostelium discoideum (Social amoeba).